A 355-amino-acid polypeptide reads, in one-letter code: UDP-N-acetylglucosamine--N-acetylmuramyl-(pentapeptide) pyrophosphoryl-undecaprenol N-acetylglucosamine transferase (355 aa).

Residues 13–15, Asn125, Arg162, Ser190, Ile244, and Gln289 contribute to the UDP-N-acetyl-alpha-D-glucosamine site; that span reads TGG.

Belongs to the glycosyltransferase 28 family. MurG subfamily.

Its subcellular location is the cell inner membrane. The enzyme catalyses di-trans,octa-cis-undecaprenyl diphospho-N-acetyl-alpha-D-muramoyl-L-alanyl-D-glutamyl-meso-2,6-diaminopimeloyl-D-alanyl-D-alanine + UDP-N-acetyl-alpha-D-glucosamine = di-trans,octa-cis-undecaprenyl diphospho-[N-acetyl-alpha-D-glucosaminyl-(1-&gt;4)]-N-acetyl-alpha-D-muramoyl-L-alanyl-D-glutamyl-meso-2,6-diaminopimeloyl-D-alanyl-D-alanine + UDP + H(+). It participates in cell wall biogenesis; peptidoglycan biosynthesis. Cell wall formation. Catalyzes the transfer of a GlcNAc subunit on undecaprenyl-pyrophosphoryl-MurNAc-pentapeptide (lipid intermediate I) to form undecaprenyl-pyrophosphoryl-MurNAc-(pentapeptide)GlcNAc (lipid intermediate II). The sequence is that of UDP-N-acetylglucosamine--N-acetylmuramyl-(pentapeptide) pyrophosphoryl-undecaprenol N-acetylglucosamine transferase from Neisseria meningitidis serogroup C (strain 053442).